The following is a 302-amino-acid chain: MTAPERVGAGPGFAPGALTVHHHPDELAKVTRALRATGRRITLVPTMGALHEGHLELIRRARRDSNSVVVVSIFVNPLQFGPGEDFTSYPRTFETDVEACRAEGVELVFAPDRDDVYGPDPQITVHPGPLGDELEGASRPGHFAGVLTIVAKLLGIVRPDLALFGEKDYQQLVLIRRMARELNIDTAIQGIPIVRAPDGLALSSRNVYLSEEERGAALALSAALAAGAHAGREGAEAVLRAAREVLATEPLVRLDYLELRDTELGAAPAEGEARLLVAAKVGETRLIDNALVLLGDQGDSRP.

47–54 (MGALHEGH) contributes to the ATP binding site. The Proton donor role is filled by histidine 54. Residue glutamine 79 coordinates (R)-pantoate. Glutamine 79 provides a ligand contact to beta-alanine. ATP is bound at residue 165-168 (GEKD). Residue glutamine 171 participates in (R)-pantoate binding. ATP is bound by residues valine 194 and 202–205 (LSSR).

It belongs to the pantothenate synthetase family. As to quaternary structure, homodimer.

Its subcellular location is the cytoplasm. The enzyme catalyses (R)-pantoate + beta-alanine + ATP = (R)-pantothenate + AMP + diphosphate + H(+). It participates in cofactor biosynthesis; (R)-pantothenate biosynthesis; (R)-pantothenate from (R)-pantoate and beta-alanine: step 1/1. Its function is as follows. Catalyzes the condensation of pantoate with beta-alanine in an ATP-dependent reaction via a pantoyl-adenylate intermediate. This Saccharopolyspora erythraea (strain ATCC 11635 / DSM 40517 / JCM 4748 / NBRC 13426 / NCIMB 8594 / NRRL 2338) protein is Pantothenate synthetase.